The following is a 235-amino-acid chain: tRNA (guanine-N(1)-)-methyltransferase (235 aa).

S-adenosyl-L-methionine contacts are provided by residues G112 and 131–136 (LGDFVL).

Belongs to the RNA methyltransferase TrmD family. Homodimer.

The protein localises to the cytoplasm. The catalysed reaction is guanosine(37) in tRNA + S-adenosyl-L-methionine = N(1)-methylguanosine(37) in tRNA + S-adenosyl-L-homocysteine + H(+). Its function is as follows. Specifically methylates guanosine-37 in various tRNAs. The protein is tRNA (guanine-N(1)-)-methyltransferase of Synechococcus elongatus (strain ATCC 33912 / PCC 7942 / FACHB-805) (Anacystis nidulans R2).